The primary structure comprises 89 residues: Repressor protein (89 aa).

A DNA-binding region (H-T-H motif) is located at residues 29-52; sequence SGDIARNTGYSRRRISDRCTVLVD.

Its function is as follows. Transcriptional repressor expressed under lysogenic conditions, which specifically binds the host DNA site 'RRGAAG'. The binding occurs cooperatively, probably as 2 copies of a dimer. Possibly prevents RNA polymerase access to the promoters for lytic cell cycle transcription. This Halobacterium salinarum (Halobacterium halobium) protein is Repressor protein (T6).